Reading from the N-terminus, the 109-residue chain is U-scoloptoxin(16)-Cw1a (109 aa).

An N-terminal signal peptide occupies residues 1-21; that stretch reads MNAVFIVFLSAILSYPHESFA.

This sequence belongs to the scoloptoxin-16 family. Contains 4 disulfide bonds. In terms of tissue distribution, expressed by the venom gland.

The protein resides in the secreted. The protein is U-scoloptoxin(16)-Cw1a of Cormocephalus westwoodi (Westwood's green centipede).